The primary structure comprises 272 residues: MICOS complex subunit MIC27 (272 aa).

The N-terminal 24 residues, 1–24 (MAAKVARLAAAASSLPFVCAVYAE), are a transit peptide targeting the mitochondrion. Residues 28-107 (SKSQLVKPKQ…YVYLKNPPPD (80 aa)) are Mitochondrial intermembrane-facing. Residues 108 to 126 (FLPRVGIITISGLAGVVLA) traverse the membrane as a helical segment. Residues 127 to 134 (RKDSRFKK) are Mitochondrial matrix-facing. Residues 135–152 (IAYPLGLTTLGISVCYPA) traverse the membrane as a helical segment. Over 153–272 (QAVVIAKITG…EDVDMYSTRS (120 aa)) the chain is Mitochondrial intermembrane. A disordered region spans residues 187–272 (SKLQQESKSV…EDVDMYSTRS (86 aa)). Composition is skewed to polar residues over residues 188-198 (KLQQESKSVTQ) and 206-245 (ISNV…TVKT).

This sequence belongs to the apolipoprotein O/MICOS complex subunit Mic27 family. As to quaternary structure, component of the mitochondrial contact site and cristae organizing system (MICOS) complex (also known as MINOS or MitOS complex).

It is found in the mitochondrion inner membrane. In terms of biological role, component of the MICOS complex, a large protein complex of the mitochondrial inner membrane that plays crucial roles in the maintenance of crista junctions, inner membrane architecture, and formation of contact sites to the outer membrane. The sequence is that of MICOS complex subunit MIC27 (APOOL) from Gallus gallus (Chicken).